We begin with the raw amino-acid sequence, 705 residues long: Lethal(3)malignant brain tumor-like protein 2 (705 aa).

Positions 1–84 (MEKPPSIEET…GTPRSLDGSG (84 aa)) are disordered. S13 is modified (phosphoserine). The span at 15–25 (PMEEEEDDDLE) shows a compositional bias: acidic residues. A compositionally biased stretch (low complexity) spans 38-49 (SSVGSESSSYLE). Acidic residues predominate over residues 50–60 (ESSEAENEDRE). At S67 the chain carries Phosphoserine. The residue at position 76 (T76) is a Phosphothreonine. The FCS-type zinc finger occupies 81–116 (DGSGSEPAVCEMCGIVGTREAFFSKTKRFCSVSCSR). 4 residues coordinate Zn(2+): C90, C93, C110, and C114. 4 MBT repeats span residues 179 to 283 (FDWG…LVPP), 291 to 391 (TDWK…IKMS), 397 to 500 (MAHH…LTPP), and 508 to 604 (FNWE…LQPP). The residue at position 338 (S338) is a Phosphoserine. K405 participates in a covalent cross-link: Glycyl lysine isopeptide (Lys-Gly) (interchain with G-Cter in SUMO2). The interval 608 to 705 (EPATPLKAKE…VENIKQETDD (98 aa)) is disordered. A compositionally biased stretch (basic residues) spans 619–634 (TKKKKKQFGKKRKRIP). Residues K647, K659, and K675 each participate in a glycyl lysine isopeptide (Lys-Gly) (interchain with G-Cter in SUMO2) cross-link. 3 positions are modified to phosphoserine: S683, S688, and S689. Residue K700 forms a Glycyl lysine isopeptide (Lys-Gly) (interchain with G-Cter in SUMO1); alternate linkage. K700 is covalently cross-linked (Glycyl lysine isopeptide (Lys-Gly) (interchain with G-Cter in SUMO2); alternate).

In terms of assembly, part of the E2F6.com-1 complex in G0 phase composed of E2F6, MGA, MAX, TFDP1, CBX3, BAT8, EUHMTASE1, RING1, RNF2, MBLR, BAT8 and YAF2.

It localises to the nucleus. In terms of biological role, putative Polycomb group (PcG) protein. PcG proteins maintain the transcriptionally repressive state of genes, probably via a modification of chromatin, rendering it heritably changed in its expressibility. Its association with a chromatin-remodeling complex suggests that it may contribute to prevent expression of genes that trigger the cell into mitosis. Binds to monomethylated and dimethylated 'Lys-20' on histone H4. Binds histone H3 peptides that are monomethylated or dimethylated on 'Lys-4', 'Lys-9' or 'Lys-27'. The protein is Lethal(3)malignant brain tumor-like protein 2 (L3MBTL2) of Pongo abelii (Sumatran orangutan).